A 57-amino-acid chain; its full sequence is Large ribosomal subunit protein bL32 (57 aa).

Residues 1 to 22 are disordered; that stretch reads MAVPKKKTSKSKRDKRRATWRH.

Belongs to the bacterial ribosomal protein bL32 family.

This Nostoc punctiforme (strain ATCC 29133 / PCC 73102) protein is Large ribosomal subunit protein bL32.